The sequence spans 343 residues: Dihydroorotase (343 aa).

Zn(2+)-binding residues include histidine 14 and histidine 16. Residues 16-18 and asparagine 42 each bind substrate; that span reads HLR. Zn(2+) is bound by residues lysine 99, histidine 136, and histidine 174. At lysine 99 the chain carries N6-carboxylysine. Residue histidine 136 participates in substrate binding. Leucine 219 contacts substrate. Aspartate 247 is a Zn(2+) binding site. Residue aspartate 247 is part of the active site. The substrate site is built by histidine 251 and alanine 263.

The protein belongs to the metallo-dependent hydrolases superfamily. DHOase family. Class II DHOase subfamily. Homodimer. Zn(2+) serves as cofactor.

The enzyme catalyses (S)-dihydroorotate + H2O = N-carbamoyl-L-aspartate + H(+). Its pathway is pyrimidine metabolism; UMP biosynthesis via de novo pathway; (S)-dihydroorotate from bicarbonate: step 3/3. In terms of biological role, catalyzes the reversible cyclization of carbamoyl aspartate to dihydroorotate. The chain is Dihydroorotase from Psychromonas ingrahamii (strain DSM 17664 / CCUG 51855 / 37).